Reading from the N-terminus, the 513-residue chain is 2-isopropylmalate synthase (513 aa).

Positions 4–268 (IKIFDTTLRD…ETGIKTELIY (265 aa)) constitute a Pyruvate carboxyltransferase domain. Residues Asp13, His203, His205, and Asn239 each contribute to the Mn(2+) site. Residues 392–513 (KLVHFHVHTG…GLLRKNGGAE (122 aa)) form a regulatory domain region.

The protein belongs to the alpha-IPM synthase/homocitrate synthase family. LeuA type 1 subfamily. Homodimer. Mn(2+) is required as a cofactor.

It localises to the cytoplasm. The catalysed reaction is 3-methyl-2-oxobutanoate + acetyl-CoA + H2O = (2S)-2-isopropylmalate + CoA + H(+). Its pathway is amino-acid biosynthesis; L-leucine biosynthesis; L-leucine from 3-methyl-2-oxobutanoate: step 1/4. Functionally, catalyzes the condensation of the acetyl group of acetyl-CoA with 3-methyl-2-oxobutanoate (2-ketoisovalerate) to form 3-carboxy-3-hydroxy-4-methylpentanoate (2-isopropylmalate). This is 2-isopropylmalate synthase from Thermotoga maritima (strain ATCC 43589 / DSM 3109 / JCM 10099 / NBRC 100826 / MSB8).